An 879-amino-acid chain; its full sequence is Band 4.1-like protein 1 (879 aa).

Residues 1-88 (MTTETGPDSE…TPSKAQKSPQ (88 aa)) are disordered. Residues 17-35 (ETPQQPEAAAAVTTPVTPA) are compositionally biased toward low complexity. Phosphothreonine is present on Thr30. Basic and acidic residues predominate over residues 38–50 (SHPETNSNEKHLT). Position 75 is a phosphoserine (Ser75). The segment covering 76–87 (ERTTPSKAQKSP) has biased composition (polar residues). Thr79 is modified (phosphothreonine). In terms of domain architecture, FERM spans 97–378 (AICRVTLLDA…EHHTFFRLVS (282 aa)). A Phosphotyrosine modification is found at Tyr343. Phosphoserine occurs at positions 378, 430, 437, 461, and 466. Residues 381–482 (PPPKGFLVMG…VRTPTKIKEL (102 aa)) form a hydrophilic region. Positions 428-501 (SRSLDGAEFS…HKQEFLDKPE (74 aa)) are disordered. Positions 444–501 (ENHDAGPEGDKREDDAESGGRRSEAEEGEVRTPTKIKELKPEQETTPRHKQEFLDKPE) are enriched in basic and acidic residues. Thr475 carries the post-translational modification Phosphothreonine. Positions 483–541 (KPEQETTPRHKQEFLDKPEDVLLKHQASINELKRTLKEPNSKLIHRDRDWDRERRLPSS) are spectrin--actin-binding. Ser510 is subject to Phosphoserine. The segment covering 514 to 538 (LKRTLKEPNSKLIHRDRDWDRERRL) has biased composition (basic and acidic residues). Positions 514–594 (LKRTLKEPNS…QDQERDAVFL (81 aa)) are disordered. A phosphoserine mark is found at Ser540, Ser541, Ser544, and Ser546. Thr550 carries the post-translational modification Phosphothreonine. A compositionally biased stretch (basic and acidic residues) spans 550–577 (TPEKASERAGLREGSEEKVKPPRPRAPE). A phosphoserine mark is found at Ser564, Ser578, Ser639, Ser648, Ser650, Ser665, Ser666, Ser671, Ser677, and Ser684. Positions 657-696 (FAQDLKGPSSQEDESGGLEDSPDRGACSTPEMPQFESVKA) are disordered. The residue at position 685 (Thr685) is a Phosphothreonine. Phosphoserine occurs at positions 721, 782, and 868. The tract at residues 743–879 (PCITTETIST…EERDKKPQES (137 aa)) is C-terminal (CTD).

In terms of assembly, interacts with AGAP2. In terms of tissue distribution, highest expression in brain, also present in kidney, olfactory epithelium, retina, sensory ganglia, gastrointestinal tract (only enteric neurons) and lung.

The protein resides in the cytoplasm. The protein localises to the cytoskeleton. Functionally, may function to confer stability and plasticity to neuronal membrane via multiple interactions, including the spectrin-actin-based cytoskeleton, integral membrane channels and membrane-associated guanylate kinases. This Mus musculus (Mouse) protein is Band 4.1-like protein 1.